A 226-amino-acid chain; its full sequence is Lipoprotein-releasing system ATP-binding protein LolD (226 aa).

Residues 6–226 (VLISGLTKTF…KLYKGNLEEV (221 aa)) enclose the ABC transporter domain. Residue 42-49 (GESGSGKS) participates in ATP binding.

This sequence belongs to the ABC transporter superfamily. Lipoprotein translocase (TC 3.A.1.125) family. As to quaternary structure, the complex is composed of two ATP-binding proteins (LolD) and two transmembrane proteins (LolC and LolE).

Its subcellular location is the cell inner membrane. Part of the ABC transporter complex LolCDE involved in the translocation of mature outer membrane-directed lipoproteins, from the inner membrane to the periplasmic chaperone, LolA. Responsible for the formation of the LolA-lipoprotein complex in an ATP-dependent manner. The chain is Lipoprotein-releasing system ATP-binding protein LolD from Treponema denticola (strain ATCC 35405 / DSM 14222 / CIP 103919 / JCM 8153 / KCTC 15104).